The primary structure comprises 255 residues: Aliphatic sulfonates import ATP-binding protein SsuB (255 aa).

The region spanning 7-231 is the ABC transporter domain; the sequence is IKEKAFVQEG…PRNRTTPDFQ (225 aa). 39 to 46 is an ATP binding site; that stretch reads GPSGCGKS.

The protein belongs to the ABC transporter superfamily. Aliphatic sulfonates importer (TC 3.A.1.17.2) family. In terms of assembly, the complex is composed of two ATP-binding proteins (SsuB), two transmembrane proteins (SsuC) and a solute-binding protein (SsuA).

Its subcellular location is the cell membrane. It catalyses the reaction ATP + H2O + aliphatic sulfonate-[sulfonate-binding protein]Side 1 = ADP + phosphate + aliphatic sulfonateSide 2 + [sulfonate-binding protein]Side 1.. Part of the ABC transporter complex SsuABC involved in aliphatic sulfonates import. Responsible for energy coupling to the transport system. Is also involved in taurine transport. In Bacillus subtilis (strain 168), this protein is Aliphatic sulfonates import ATP-binding protein SsuB.